Here is a 363-residue protein sequence, read N- to C-terminus: MASGDFCAPGEGVEMLLQVCGKQFPPCALTEEDLIQNPRFSKLLLSLSQHVDESGLSLTLAKEQAQAWSEVRHRKTAWLRYEILQRVIQELLVDYYVKAQDTNLTSEDKKFHETLEQRLLVTELTQLSGPGQETELPPLLGLERTDLLELMPPSQDFVWMKARLQLEVEEQLKRKCFTLLCYHDPSSDTDGDTLKAAKVWTLTEVLVREKQQCLEAKSQQKEQLVLLEKKRTTYSQVLLRCLALLQRLLQEHRLQTKSELDRINAQYLELKCSAMILRLRMEELKVLSDTYSAEKVEMHRLIRDRLEGAIRLQEQDLEKSRLVLHTYEALGEDFESLVREYTQLRLAADNKRWALQELSKAQR.

The protein belongs to the HAUS4 family. In terms of assembly, component of the HAUS augmin-like complex. The complex interacts with the gamma-tubulin ring complex and this interaction is required for spindle assembly. Interacts with EML3 (phosphorylated at 'Thr-882').

It localises to the cytoplasm. The protein resides in the cytoskeleton. Its subcellular location is the microtubule organizing center. The protein localises to the centrosome. It is found in the spindle. Its function is as follows. Contributes to mitotic spindle assembly, maintenance of centrosome integrity and completion of cytokinesis as part of the HAUS augmin-like complex. This is HAUS augmin-like complex subunit 4 (Haus4) from Mus musculus (Mouse).